The primary structure comprises 430 residues: Lipoyl synthase, mitochondrial (430 aa).

The N-terminal 37 residues, 1–37 (MATSAGKLRTLYSAHSSLSSLPPSARPTLQLATLRSY), are a transit peptide targeting the mitochondrion. Over residues 39–55 (TTTPHDSPIGNTSNTPP) the composition is skewed to polar residues. The interval 39 to 58 (TTTPHDSPIGNTSNTPPTVK) is disordered. Cysteine 141, cysteine 146, cysteine 152, cysteine 172, cysteine 176, cysteine 179, and serine 387 together coordinate [4Fe-4S] cluster. The Radical SAM core domain occupies 155-376 (GSSKSAATAT…KERALEMGFL (222 aa)).

It belongs to the radical SAM superfamily. Lipoyl synthase family. Requires [4Fe-4S] cluster as cofactor.

It localises to the mitochondrion. It carries out the reaction [[Fe-S] cluster scaffold protein carrying a second [4Fe-4S](2+) cluster] + N(6)-octanoyl-L-lysyl-[protein] + 2 oxidized [2Fe-2S]-[ferredoxin] + 2 S-adenosyl-L-methionine + 4 H(+) = [[Fe-S] cluster scaffold protein] + N(6)-[(R)-dihydrolipoyl]-L-lysyl-[protein] + 4 Fe(3+) + 2 hydrogen sulfide + 2 5'-deoxyadenosine + 2 L-methionine + 2 reduced [2Fe-2S]-[ferredoxin]. It participates in protein modification; protein lipoylation via endogenous pathway; protein N(6)-(lipoyl)lysine from octanoyl-[acyl-carrier-protein]: step 2/2. Functionally, catalyzes the radical-mediated insertion of two sulfur atoms into the C-6 and C-8 positions of the octanoyl moiety bound to the lipoyl domains of lipoate-dependent enzymes, thereby converting the octanoylated domains into lipoylated derivatives. This chain is Lipoyl synthase, mitochondrial, found in Ajellomyces capsulatus (strain G186AR / H82 / ATCC MYA-2454 / RMSCC 2432) (Darling's disease fungus).